Here is a 122-residue protein sequence, read N- to C-terminus: Large ribosomal subunit protein uL14 (122 aa).

It belongs to the universal ribosomal protein uL14 family. Part of the 50S ribosomal subunit. Forms a cluster with proteins L3 and L19. In the 70S ribosome, L14 and L19 interact and together make contacts with the 16S rRNA in bridges B5 and B8.

Binds to 23S rRNA. Forms part of two intersubunit bridges in the 70S ribosome. This Bacillus cytotoxicus (strain DSM 22905 / CIP 110041 / 391-98 / NVH 391-98) protein is Large ribosomal subunit protein uL14.